The sequence spans 342 residues: Ribosomal RNA small subunit methyltransferase C (342 aa).

Belongs to the methyltransferase superfamily. RsmC family. Monomer.

The protein localises to the cytoplasm. It catalyses the reaction guanosine(1207) in 16S rRNA + S-adenosyl-L-methionine = N(2)-methylguanosine(1207) in 16S rRNA + S-adenosyl-L-homocysteine + H(+). Specifically methylates the guanine in position 1207 of 16S rRNA in the 30S particle. This Erwinia tasmaniensis (strain DSM 17950 / CFBP 7177 / CIP 109463 / NCPPB 4357 / Et1/99) protein is Ribosomal RNA small subunit methyltransferase C.